Here is a 79-residue protein sequence, read N- to C-terminus: MVGVNSLRSALYLIVLILFVQLTYFSDARVMDVDLSRAFLPLTGIGCGESCVWIPCVSAAIGCSCSNKICYRNGIIPKK.

Positions 1 to 43 (MVGVNSLRSALYLIVLILFVQLTYFSDARVMDVDLSRAFLPLT) are excised as a propeptide. The segment at residues 44-73 (GIGCGESCVWIPCVSAAIGCSCSNKICYRN) is a cross-link (cyclopeptide (Gly-Asn)). Cystine bridges form between C47–C63, C51–C65, and C56–C70. Residues 74–79 (GIIPKK) constitute a propeptide that is removed on maturation.

In terms of processing, this is a cyclic peptide. Post-translationally, contains 3 disulfide bonds. As to expression, expressed in midvein, lamina and periphery of leaves (at protein level).

In terms of biological role, probably participates in a plant defense mechanism. The chain is Cyclotide phyb-A from Petunia hybrida (Petunia).